We begin with the raw amino-acid sequence, 311 residues long: E3 ubiquitin-protein ligase RNF126 (311 aa).

Residues cysteine 13, cysteine 16, cysteine 29, and cysteine 32 each coordinate Zn(2+). The C4-type zinc finger occupies 13 to 32 (CHSCTAEIIPRLPEYTCPRC). Disordered stretches follow at residues 42–62 (ETRNSENNSSNNSGTDQNRPS) and 95–133 (GTSGPVEEPRDGESRREHQSRQRYGARQPRARLSTRRAA). The span at 101-114 (EEPRDGESRREHQS) shows a compositional bias: basic and acidic residues. Positions 123–133 (PRARLSTRRAA) are enriched in basic residues. The segment at 227–268 (CPVCKEDYTVGESVRQLPCNHLFHNDCIIPWLEQHDTCPVCR) adopts an RING-type zinc-finger fold. The segment at 274-311 (QNTATNPPGLTEMTFSSSSTSSSSSTSPTDENNAANNS) is disordered. Residues 289–300 (SSSSTSSSSSTS) show a composition bias toward low complexity. Polar residues predominate over residues 301-311 (PTDENNAANNS).

Its subcellular location is the cytoplasm. It localises to the nucleus. The enzyme catalyses S-ubiquitinyl-[E2 ubiquitin-conjugating enzyme]-L-cysteine + [acceptor protein]-L-lysine = [E2 ubiquitin-conjugating enzyme]-L-cysteine + N(6)-ubiquitinyl-[acceptor protein]-L-lysine.. The protein operates within protein modification; protein ubiquitination. In terms of biological role, E3 ubiquitin-protein ligase that mediates ubiquitination oF target proteins. Depending on the associated E2 ligase, mediates 'Lys-27'-, 'Lys-29'-, 'Lys-48'- and/or 'Lys-63'-linked polyubiquitination of substrates. Part of a BAG6-dependent quality control process ensuring that proteins of the secretory pathway that are mislocalized to the cytosol are degraded by the proteasome. Probably acts by providing the ubiquitin ligase activity associated with the BAG6 complex and be responsible for ubiquitination of the hydrophobic mislocalized proteins and their targeting to the proteasome. The protein is E3 ubiquitin-protein ligase RNF126 of Xenopus tropicalis (Western clawed frog).